We begin with the raw amino-acid sequence, 64 residues long: Cecropin-A (64 aa).

The first 22 residues, 1 to 22 (MNFSRIFFFVFACLTALAMVNA), serve as a signal peptide directing secretion. A propeptide spans 23–26 (APEP) (removed by a dipeptidylpeptidase). The residue at position 63 (K63) is a Lysine amide.

This sequence belongs to the cecropin family. A protein with the same sequence as cecropin A, but lacking the carboxyl blocking group, has been isolated and called cecropin C.

It is found in the secreted. In terms of biological role, cecropins have lytic and antibacterial activity against several Gram-positive and Gram-negative bacteria. The sequence is that of Cecropin-A from Hyalophora cecropia (Cecropia moth).